We begin with the raw amino-acid sequence, 116 residues long: Chorion protein S15 (116 aa).

The first 18 residues, 1 to 18, serve as a signal peptide directing secretion; it reads MKFLIAFAVLALVACINA.

It belongs to the chorion protein S15/S18 family.

Its subcellular location is the secreted. Chorion membrane (egg shell) protein; plays a role in protecting the egg from the environment. This Drosophila virilis (Fruit fly) protein is Chorion protein S15 (Cp15).